The following is a 108-amino-acid chain: uncharacterized protein (108 aa).

A helical transmembrane segment spans residues 15 to 37; it reads SYYFYIFWNFFLPMFIVYRGFGL.

Its subcellular location is the membrane. This is an uncharacterized protein from Archaeoglobus fulgidus (strain ATCC 49558 / DSM 4304 / JCM 9628 / NBRC 100126 / VC-16).